Reading from the N-terminus, the 248-residue chain is Biosynthetic peptidoglycan transglycosylase (248 aa).

A helical transmembrane segment spans residues 17 to 37 (LLIFFFASTILAVIVYRFMPV).

This sequence belongs to the glycosyltransferase 51 family.

Its subcellular location is the cell inner membrane. The enzyme catalyses [GlcNAc-(1-&gt;4)-Mur2Ac(oyl-L-Ala-gamma-D-Glu-L-Lys-D-Ala-D-Ala)](n)-di-trans,octa-cis-undecaprenyl diphosphate + beta-D-GlcNAc-(1-&gt;4)-Mur2Ac(oyl-L-Ala-gamma-D-Glu-L-Lys-D-Ala-D-Ala)-di-trans,octa-cis-undecaprenyl diphosphate = [GlcNAc-(1-&gt;4)-Mur2Ac(oyl-L-Ala-gamma-D-Glu-L-Lys-D-Ala-D-Ala)](n+1)-di-trans,octa-cis-undecaprenyl diphosphate + di-trans,octa-cis-undecaprenyl diphosphate + H(+). Its pathway is cell wall biogenesis; peptidoglycan biosynthesis. In terms of biological role, peptidoglycan polymerase that catalyzes glycan chain elongation from lipid-linked precursors. This Bacteroides thetaiotaomicron (strain ATCC 29148 / DSM 2079 / JCM 5827 / CCUG 10774 / NCTC 10582 / VPI-5482 / E50) protein is Biosynthetic peptidoglycan transglycosylase.